The following is a 160-amino-acid chain: RxLR effector protein PexRD44 (160 aa).

The first 21 residues, 1–21 (MRLLLWVLISMLSIALSSCAA), serve as a signal peptide directing secretion. Positions 54–76 (RFLRGESSKIVNLKQEEGVFEER) match the RxLR-dEER motif.

This sequence belongs to the RxLR effector family.

It localises to the secreted. The protein resides in the host cell membrane. Its subcellular location is the host nucleus. The protein localises to the host nucleolus. Its function is as follows. Effector that is involved in host plant infection. Contributes to virulence during the early infection stage, by inhibiting plant defense responses induced by both PAMP-triggered immunity (PTI) and effector-triggered immunity (ETI). The protein is RxLR effector protein PexRD44 of Phytophthora infestans (strain T30-4) (Potato late blight agent).